A 200-amino-acid chain; its full sequence is Ribosome maturation factor RimM (200 aa).

The PRC barrel domain maps to 103 to 181 (KEGEYYFYQL…KIVAKRLEYL (79 aa)).

It belongs to the RimM family. Binds ribosomal protein uS19.

The protein resides in the cytoplasm. Its function is as follows. An accessory protein needed during the final step in the assembly of 30S ribosomal subunit, possibly for assembly of the head region. Essential for efficient processing of 16S rRNA. May be needed both before and after RbfA during the maturation of 16S rRNA. It has affinity for free ribosomal 30S subunits but not for 70S ribosomes. This Kosmotoga olearia (strain ATCC BAA-1733 / DSM 21960 / TBF 19.5.1) protein is Ribosome maturation factor RimM.